The chain runs to 361 residues: Peptide chain release factor 1 (361 aa).

Gln238 is modified (N5-methylglutamine).

Belongs to the prokaryotic/mitochondrial release factor family. Post-translationally, methylated by PrmC. Methylation increases the termination efficiency of RF1.

The protein resides in the cytoplasm. Peptide chain release factor 1 directs the termination of translation in response to the peptide chain termination codons UAG and UAA. In Mesomycoplasma hyopneumoniae (strain 7448) (Mycoplasma hyopneumoniae), this protein is Peptide chain release factor 1.